The primary structure comprises 548 residues: 2-succinyl-5-enolpyruvyl-6-hydroxy-3-cyclohexene-1-carboxylate synthase (548 aa).

This sequence belongs to the TPP enzyme family. MenD subfamily. Homodimer. Requires Mg(2+) as cofactor. Mn(2+) serves as cofactor. The cofactor is thiamine diphosphate.

The enzyme catalyses isochorismate + 2-oxoglutarate + H(+) = 5-enolpyruvoyl-6-hydroxy-2-succinyl-cyclohex-3-ene-1-carboxylate + CO2. It functions in the pathway quinol/quinone metabolism; 1,4-dihydroxy-2-naphthoate biosynthesis; 1,4-dihydroxy-2-naphthoate from chorismate: step 2/7. It participates in quinol/quinone metabolism; menaquinone biosynthesis. In terms of biological role, catalyzes the thiamine diphosphate-dependent decarboxylation of 2-oxoglutarate and the subsequent addition of the resulting succinic semialdehyde-thiamine pyrophosphate anion to isochorismate to yield 2-succinyl-5-enolpyruvyl-6-hydroxy-3-cyclohexene-1-carboxylate (SEPHCHC). In Mycobacterium marinum (strain ATCC BAA-535 / M), this protein is 2-succinyl-5-enolpyruvyl-6-hydroxy-3-cyclohexene-1-carboxylate synthase.